Here is a 286-residue protein sequence, read N- to C-terminus: MTILNKIVKVGNIEVANDKPFTLFGGMNVLESRDMAMRVCEQYVEVTNKLGVPYVFKASFDKANRSSIHSYRGPGMEEGLKIFQELKDTFGVSIITDVHEIYQCKPVAEVVDIIQLPAFLARQTDLVEAMARTGVVINVKKPQFLSPGQMGNIVEKIAECGNENVILCDRGTNFGYDNLVVDMLGFNIMKKVSKGCPVIFDVTHSLQCRDPFGAASGGRRDQVTELARSGMAIGLAGLFLEAHPDPNSAKCDGPSALPLSKLEAFVSQMKAIDDLVKSFEEIDTSR.

Belongs to the KdsA family.

It is found in the cytoplasm. The enzyme catalyses D-arabinose 5-phosphate + phosphoenolpyruvate + H2O = 3-deoxy-alpha-D-manno-2-octulosonate-8-phosphate + phosphate. The protein operates within carbohydrate biosynthesis; 3-deoxy-D-manno-octulosonate biosynthesis; 3-deoxy-D-manno-octulosonate from D-ribulose 5-phosphate: step 2/3. It functions in the pathway bacterial outer membrane biogenesis; lipopolysaccharide biosynthesis. In Actinobacillus pleuropneumoniae (Haemophilus pleuropneumoniae), this protein is 2-dehydro-3-deoxyphosphooctonate aldolase (kdsA).